The sequence spans 340 residues: Anthocyanidin reductase (340 aa).

NADP(+) contacts are provided by Lys-49 and Tyr-169.

This sequence belongs to the NAD(P)-dependent epimerase/dehydratase family. Dihydroflavonol-4-reductase subfamily. In terms of assembly, homo- or heterodimer. Flowers and young siliques. Detected specifically in the endothelium of seed coat.

The enzyme catalyses a (2R,3R)-flavan-3-ol + 2 NAD(+) = an anthocyanidin with a 3-hydroxy group + 2 NADH + 2 H(+). It catalyses the reaction a (2R,3R)-flavan-3-ol + 2 NADP(+) = an anthocyanidin with a 3-hydroxy group + 2 NADPH + 2 H(+). Its pathway is secondary metabolite biosynthesis; flavonoid biosynthesis. Inhibited by (+)-catechin, quercetin and (+)- and (-)-dihydroquercetin. Not inhibited by salt. Positive cooperativity with NADPH acting as cosubstrate and modulator. Its function is as follows. Involved in the biosynthesis of condensed tannins. Converts cyanidin into (-)-epicatechin as the major product. The chain is Anthocyanidin reductase (BAN) from Arabidopsis thaliana (Mouse-ear cress).